We begin with the raw amino-acid sequence, 336 residues long: MKRSAPVQFAKKDVANCRWLGEFLVHLESTRNVSAKTVTAYTTDLIQFFEFLTDESGHQEMSAVDPELVEVADVRRFMGDLLDSGIKPRSIARKLASVKSFYRFLLDTGKIERSPLSLVLTPRLERKIPDFLSEEEASRLFDQLVLSDQESVGPEQGQKAAVQRFELARDRAVLELLYGCGLRLSEVTGLENADVDLVHGFLKVTGKGRKQRIVPFGEPAAEALRNYFEVRRNFFRILKEGAGETSKVFVTAKGRQIYPMLVQRMTKRYLSPVTESARKNPHMLRHTFATHMLNGGADLKSVSEMLGHSNLTTTELYTHVTFNRLRDAYTKAHPRA.

The Core-binding (CB) domain maps to 14–106; the sequence is VANCRWLGEF…SVKSFYRFLL (93 aa). One can recognise a Tyr recombinase domain in the interval 127 to 330; sequence KIPDFLSEEE…TFNRLRDAYT (204 aa). Catalysis depends on residues Arg-183, Lys-207, His-282, Arg-285, and His-308. Tyr-317 functions as the O-(3'-phospho-DNA)-tyrosine intermediate in the catalytic mechanism.

It belongs to the 'phage' integrase family. XerC subfamily. In terms of assembly, forms a cyclic heterotetrameric complex composed of two molecules of XerC and two molecules of XerD.

It is found in the cytoplasm. Its function is as follows. Site-specific tyrosine recombinase, which acts by catalyzing the cutting and rejoining of the recombining DNA molecules. The XerC-XerD complex is essential to convert dimers of the bacterial chromosome into monomers to permit their segregation at cell division. It also contributes to the segregational stability of plasmids. The chain is Tyrosine recombinase XerC from Chlorobaculum tepidum (strain ATCC 49652 / DSM 12025 / NBRC 103806 / TLS) (Chlorobium tepidum).